Consider the following 405-residue polypeptide: Homocitrate synthase AksA (405 aa).

Residues 23–274 (IEICDVTLRD…IERYDTTKLN (252 aa)) enclose the Pyruvate carboxyltransferase domain.

It belongs to the alpha-IPM synthase/homocitrate synthase family.

It carries out the reaction acetyl-CoA + 2-oxoglutarate + H2O = (2R)-homocitrate + CoA + H(+). The enzyme catalyses 2-oxoadipate + acetyl-CoA + H2O = (R)-dihomocitrate + CoA + H(+). The catalysed reaction is 2-oxoheptanedioate + acetyl-CoA + H2O = (R)-trihomocitrate + CoA + H(+). It participates in organic acid metabolism; 2-oxosuberate biosynthesis. Catalyzes the condensation of alpha-ketoglutarate and acetyl-CoA to form (R)-homocitrate. Can also catalyze the condensation of alpha-ketoadipate with acetyl-CoA to form (R)-homo(2)citrate, and the condensation of alpha-ketopimelate with acetyl-CoA to form (R)-homo(3)citrate. These reactions are part of the biosynthesis pathway of coenzyme B and biotin. The chain is Homocitrate synthase AksA (aksA) from Methanosarcina mazei (strain ATCC BAA-159 / DSM 3647 / Goe1 / Go1 / JCM 11833 / OCM 88) (Methanosarcina frisia).